The chain runs to 295 residues: Tissue factor (295 aa).

The N-terminal stretch at 1 to 28 (MAIPMRPRLLAALAPTFLGFLLLQVAVG) is a signal peptide. The Extracellular segment spans residues 29-252 (AGTPPGKAFN…TEQWKSVLGE (224 aa)). Residues Asn38 and Asn58 are each glycosylated (N-linked (GlcNAc...) asparagine). A disulfide bridge connects residues Cys76 and Cys84. Residues Asn95, Asn109, Asn170, and Asn201 are each glycosylated (N-linked (GlcNAc...) asparagine). A disulfide bridge links Cys219 with Cys242. The short motif at 246-248 (WKS) is the WKS motif element. The chain crosses the membrane as a helical span at residues 253-275 (TLIIVGAVVFLVTVFIILLTISL). Residue Cys276 is the site of S-palmitoyl cysteine attachment. Residues 276–295 (CKRRKNRAGQKRKNTPSRLA) are Cytoplasmic-facing.

This sequence belongs to the tissue factor family. As to quaternary structure, interacts with HSPE; the interaction, inhibited by heparin, promotes the generation of activated factor X and activates coagulation in the presence of activated factor VII.

The protein localises to the membrane. Its function is as follows. Initiates blood coagulation by forming a complex with circulating factor VII or VIIa. The [TF:VIIa] complex activates factors IX or X by specific limited proteolysis. TF plays a role in normal hemostasis by initiating the cell-surface assembly and propagation of the coagulation protease cascade. The polypeptide is Tissue factor (F3) (Rattus norvegicus (Rat)).